The following is a 78-amino-acid chain: Protein Vpr (78 aa).

A homooligomerization region spans residues 1-42; it reads MEQAPEDQGPQREPHNEWTLELLEELKNEAVRHFPRIWLHGL.

Belongs to the HIV-1 VPR protein family. In terms of assembly, homooligomer, may form homodimer. Interacts with p6-gag region of the Pr55 Gag precursor protein through a (Leu-X-X)4 motif near the C-terminus of the P6gag protein. Interacts with host UNG. May interact with host RAD23A/HHR23A. Interacts with host VPRBP/DCAF1, leading to hijack the CUL4A-RBX1-DDB1-DCAF1/VPRBP complex, mediating ubiquitination of host proteins such as TERT and ZGPAT and arrest of the cell cycle in G2 phase. Phosphorylated on several residues by host. These phosphorylations regulate VPR activity for the nuclear import of the HIV-1 pre-integration complex.

It localises to the virion. The protein localises to the host nucleus. The protein resides in the host extracellular space. In terms of biological role, during virus replication, may deplete host UNG protein, and incude G2-M cell cycle arrest. Acts by targeting specific host proteins for degradation by the 26S proteasome, through association with the cellular CUL4A-DDB1 E3 ligase complex by direct interaction with host VPRPB/DCAF-1. Cell cycle arrest reportedly occurs within hours of infection and is not blocked by antiviral agents, suggesting that it is initiated by the VPR carried into the virion. Additionally, VPR induces apoptosis in a cell cycle dependent manner suggesting that these two effects are mechanistically linked. Detected in the serum and cerebrospinal fluid of AIDS patient, VPR may also induce cell death to bystander cells. During virus entry, plays a role in the transport of the viral pre-integration (PIC) complex to the host nucleus. This function is crucial for viral infection of non-dividing macrophages. May act directly at the nuclear pore complex, by binding nucleoporins phenylalanine-glycine (FG)-repeat regions. This is Protein Vpr from Human immunodeficiency virus type 1 group M subtype B (isolate PCV12) (HIV-1).